Here is a 209-residue protein sequence, read N- to C-terminus: Protein ASG7 (209 aa).

Residues 1 to 49 (MTTLASSIEHKTKHLAAPFENDENPWMKKYCCQCKSCKMSVPVQPWLPR) are Lumenal-facing. The chain crosses the membrane as a helical span at residues 50–70 (FFVFGILCPVFWLVNLLAWWF). Topologically, residues 71-184 (LQYWQPHELE…LLRKTFRDWN (114 aa)) are cytoplasmic. A phosphoserine mark is found at Ser121, Ser123, and Ser125. Thr153 carries the phosphothreonine modification. The helical transmembrane segment at 185-205 (LRSLLGLLIDSILIIFVVLLC) threads the bilayer. Residues 206 to 209 (KKSR) are Lumenal-facing.

It localises to the endomembrane system. Required for receptor inhibition of inappropriately expressed a-factor receptor (STE3) in MAT a cells. Inhibits signaling by relocalizing the G protein beta-gamma (STE4-STE18) subunit to intracellular membranes. May also be a mechanism for the down-regulation of the mating pheromone response after the zygotic fusion event, promoting the transition of the new diploid cell to vegetative growth. The sequence is that of Protein ASG7 (ASG7) from Saccharomyces cerevisiae (strain ATCC 204508 / S288c) (Baker's yeast).